Consider the following 94-residue polypeptide: Co-chaperonin GroES (94 aa).

This sequence belongs to the GroES chaperonin family. As to quaternary structure, heptamer of 7 subunits arranged in a ring. Interacts with the chaperonin GroEL.

The protein localises to the cytoplasm. In terms of biological role, together with the chaperonin GroEL, plays an essential role in assisting protein folding. The GroEL-GroES system forms a nano-cage that allows encapsulation of the non-native substrate proteins and provides a physical environment optimized to promote and accelerate protein folding. GroES binds to the apical surface of the GroEL ring, thereby capping the opening of the GroEL channel. The chain is Co-chaperonin GroES from Ehrlichia chaffeensis.